A 258-amino-acid chain; its full sequence is Synapse differentiation-inducing gene protein 1 (258 aa).

Over 1 to 181 the chain is Cytoplasmic; it reads MAGVVEQKSG…NFLVMPPRDH (181 aa). S137 is modified (phosphoserine). The chain crosses the membrane as a helical span at residues 182-202; it reads LGLSVFSMLCCFWPLGIAAFY. The Extracellular portion of the chain corresponds to 203–228; it reads LSHETNKAVAKGDFHQASTSSRRALF. The helical intramembrane region spans 229–249; that stretch reads LAVLSITIGTGIYVGVAVALI. The Extracellular segment spans residues 250-258; sequence AYLSKSNHL.

The protein belongs to the CD225/Dispanin family. As to quaternary structure, homodimer. Interacts with GRIA1 and GRIA2.

It localises to the cell membrane. Its subcellular location is the early endosome membrane. The protein resides in the postsynaptic density membrane. The protein localises to the synapse. It is found in the cell projection. It localises to the dendrite. Its subcellular location is the dendritic spine. Functionally, may regulate AMPA receptor content at nascent synapses, and have a role in postsynaptic development and maturation. The sequence is that of Synapse differentiation-inducing gene protein 1 (SYNDIG1) from Bos taurus (Bovine).